The chain runs to 206 residues: Testis-expressed protein 38 (206 aa).

Residues 15 to 35 (VSLYFGILGLCSVITGGCIIF) form a helical membrane-spanning segment.

The protein localises to the membrane. The protein is Testis-expressed protein 38 (TEX38) of Homo sapiens (Human).